The sequence spans 618 residues: Proline--tRNA ligase (618 aa).

The protein belongs to the class-II aminoacyl-tRNA synthetase family. ProS type 1 subfamily. In terms of assembly, homodimer.

It is found in the cytoplasm. The catalysed reaction is tRNA(Pro) + L-proline + ATP = L-prolyl-tRNA(Pro) + AMP + diphosphate. In terms of biological role, catalyzes the attachment of proline to tRNA(Pro) in a two-step reaction: proline is first activated by ATP to form Pro-AMP and then transferred to the acceptor end of tRNA(Pro). As ProRS can inadvertently accommodate and process non-cognate amino acids such as alanine and cysteine, to avoid such errors it has two additional distinct editing activities against alanine. One activity is designated as 'pretransfer' editing and involves the tRNA(Pro)-independent hydrolysis of activated Ala-AMP. The other activity is designated 'posttransfer' editing and involves deacylation of mischarged Ala-tRNA(Pro). The misacylated Cys-tRNA(Pro) is not edited by ProRS. The protein is Proline--tRNA ligase of Streptococcus pyogenes serotype M12 (strain MGAS2096).